Reading from the N-terminus, the 882-residue chain is Valine--tRNA ligase (882 aa).

Positions 45-55 (PNVTGKLHLGH) match the 'HIGH' region motif. Residues 519 to 523 (KMSKS) carry the 'KMSKS' region motif. K522 is an ATP binding site. Residues 808-882 (LADLLNVEEE…RIAEMQKLVK (75 aa)) adopt a coiled-coil conformation.

This sequence belongs to the class-I aminoacyl-tRNA synthetase family. ValS type 1 subfamily. As to quaternary structure, monomer.

The protein localises to the cytoplasm. It carries out the reaction tRNA(Val) + L-valine + ATP = L-valyl-tRNA(Val) + AMP + diphosphate. Functionally, catalyzes the attachment of valine to tRNA(Val). As ValRS can inadvertently accommodate and process structurally similar amino acids such as threonine, to avoid such errors, it has a 'posttransfer' editing activity that hydrolyzes mischarged Thr-tRNA(Val) in a tRNA-dependent manner. The polypeptide is Valine--tRNA ligase (Streptococcus pyogenes serotype M3 (strain ATCC BAA-595 / MGAS315)).